The following is a 651-amino-acid chain: MSLPRLLKVNIRTYDNSIPISESSRKSWNQKHFALTFPKPLQRGTNDKSRPLKSQITVTRHDKRKLEEGQKPAHKWIRHSFRKILQWPPIYTAAREQTPFRHLYTSKTHLKKAEYKKSKDEKGGTPLKKDSKKKGGSYATNPESKQIVEEKTKRQNEADKTPLKSSHENEQSKKSKSSSETNPESQNSKTVSKNCSQKDKKDSKNSKKTNTEFLHTKNNPKKDLKRSKTSNDPISEICSENSLNVDFLMLVGQSDDESINFDAWLRNYSQNNSKNYSLKYTKYTKKDTKKNAKKSSDAESEDSKDAKKDSKKVKKNVKKDDKKKDVKKDTESTDAESGDSKDERKDTKKDKKKLKKDDKKKDTKKYPESTDTESGDAKDARNDSRNLKKASKNDDKKKDAKKITFSTDSESELESKESQKDEKKDKKDSKTDNKKSVKNDEESTDADSEPKGDSKKGKKDEKKGKKDSKKDDKKKDAKKNAESTEMESDLELKKDKKHSKEKKGSKKDIKKDARKDTESTDAEFDESSKTGFKTSTKIKGSDTESEESLYKPGAKKKIDESDGTSANSKMEGLESKRGFRMSSKKTTFNEKGEKASTGRVPPSREKPPLPACEPSLPSPKVRRLCWCKMPPPPPKPRYAPLPEAPWIHKLL.

Disordered stretches follow at residues 110–241 (LKKA…CSEN) and 267–615 (NYSQ…CEPS). Basic and acidic residues-rich tracts occupy residues 111-129 (KKAEYKKSKDEKGGTPLKK) and 146-173 (QIVEEKTKRQNEADKTPLKSSHENEQSK). The span at 186–195 (QNSKTVSKNC) shows a compositional bias: polar residues. The span at 196–205 (SQKDKKDSKN) shows a compositional bias: basic and acidic residues. Over residues 230-241 (SNDPISEICSEN) the composition is skewed to polar residues. A compositionally biased stretch (low complexity) spans 271-281 (NNSKNYSLKYT). Tandem repeats lie at residues 278–305 (LKYTKYTKKDTKKNAKKSSDAESEDSKD), 306–342 (AKKDSKKVKKNVKKDDKKKDVKKDTESTDAESGDSKD), 343–379 (ERKDTKKDKKKLKKDDKKKDTKKYPESTDTESGDAKD), 380–417 (ARNDSRNLKKASKNDDKKKDAKKITFSTDSESELESKE), 418–453 (SQKDEKKDKKDSKTDNKKSVKNDEESTDADSEPKGD), 454–491 (SKKGKKDEKKGKKDSKKDDKKKDAKKNAESTEMESDLE), 492–531 (LKKDKKHSKEKKGSKKDIKKDARKDTESTDAEFDESSKTG), and 532–553 (FKTSTKIKGSDTESEESLYKPG). 6 stretches are compositionally biased toward basic and acidic residues: residues 284 to 308 (TKKDTKKNAKKSSDAESEDSKDAKK), 318 to 331 (KKDDKKKDVKKDTE), 338 to 368 (GDSKDERKDTKKDKKKLKKDDKKKDTKKYPE), 375 to 402 (GDAKDARNDSRNLKKASKNDDKKKDAKK), 413 to 441 (LESKESQKDEKKDKKDSKTDNKKSVKNDE), and 448 to 482 (SEPKGDSKKGKKDEKKGKKDSKKDDKKKDAKKNAE). Over residues 495–505 (DKKHSKEKKGS) the composition is skewed to basic residues. The segment covering 506 to 518 (KKDIKKDARKDTE) has biased composition (basic and acidic residues). The span at 529-538 (KTGFKTSTKI) shows a compositional bias: polar residues. An 8 X approximate tandem repeats region spans residues 532-553 (FKTSTKIKGSDTESEESLYKPG). A compositionally biased stretch (basic and acidic residues) spans 587–607 (TFNEKGEKASTGRVPPSREKP).

As to quaternary structure, interacts with proteins of spermatozoa head including ACTL7A, CCIN, FAM209A and SPACA1; the interactions may be necessary for proper acrosome attachment to the nuclear envelope. Testis.

It is found in the cytoplasm. The protein localises to the cytoskeleton. It localises to the perinuclear theca. The protein resides in the calyx. In terms of biological role, plays a role in the establishment of normal sperm morphology during spermatogenesis and is required for acrosome attachment to the nuclear envelope. This is Cylicin-1 (CYLC1) from Homo sapiens (Human).